The chain runs to 367 residues: Membrane-bound lytic murein transglycosylase C (367 aa).

Positions 1–19 (MRKYAKYLPFCLVVPFLAA) are cleaved as a signal peptide. Cys20 carries N-palmitoyl cysteine lipidation. Cys20 is lipidated: S-diacylglycerol cysteine.

This sequence belongs to the transglycosylase Slt family.

It localises to the cell outer membrane. It catalyses the reaction Exolytic cleavage of the (1-&gt;4)-beta-glycosidic linkage between N-acetylmuramic acid (MurNAc) and N-acetylglucosamine (GlcNAc) residues in peptidoglycan, from either the reducing or the non-reducing ends of the peptidoglycan chains, with concomitant formation of a 1,6-anhydrobond in the MurNAc residue.. Functionally, murein-degrading enzyme. May play a role in recycling of muropeptides during cell elongation and/or cell division. The chain is Membrane-bound lytic murein transglycosylase C from Haemophilus ducreyi (strain 35000HP / ATCC 700724).